Reading from the N-terminus, the 297-residue chain is MIQTRLKGMGVALITPFKEDDSVDYDALLRLVDYQLQNGTDFLCVLGTTAETPTLTKEEKDKIKRLIIERVNGRIPILLGVSSNCTRAVVETLKNDDMTGVDAVLVAVPYYNKPSQEGIYQHYKAIAEATDLPVVLYNVPGRTGVNMTAETTLRLARDFKNIIAIKEASGNITQMDDIIKNKPANFDVISGDDGITFPLITLGAVGVISVIGNAFPREFSRMTRLALQGDFANALTIHHKFTELFSLLFVDGNPAGVKAMLNVMGLIENKLRLPLVPTRITTFEKMRAILNELKIKC.

Thr-49 is a pyruvate binding site. Residue Tyr-137 is the Proton donor/acceptor of the active site. Lys-166 functions as the Schiff-base intermediate with substrate in the catalytic mechanism. A pyruvate-binding site is contributed by Ile-208.

Belongs to the DapA family. As to quaternary structure, homotetramer; dimer of dimers.

Its subcellular location is the cytoplasm. It carries out the reaction L-aspartate 4-semialdehyde + pyruvate = (2S,4S)-4-hydroxy-2,3,4,5-tetrahydrodipicolinate + H2O + H(+). It functions in the pathway amino-acid biosynthesis; L-lysine biosynthesis via DAP pathway; (S)-tetrahydrodipicolinate from L-aspartate: step 3/4. Catalyzes the condensation of (S)-aspartate-beta-semialdehyde [(S)-ASA] and pyruvate to 4-hydroxy-tetrahydrodipicolinate (HTPA). This Phocaeicola vulgatus (strain ATCC 8482 / DSM 1447 / JCM 5826 / CCUG 4940 / NBRC 14291 / NCTC 11154) (Bacteroides vulgatus) protein is 4-hydroxy-tetrahydrodipicolinate synthase.